The following is a 239-amino-acid chain: MVLPSSVSQWAALIALLCAGLANAHTVITYPGYRGNNLHTNGTVEQSNGLGQAEVNGSVIFPYGMEWMYPCGGMPTTTNRTKWPVGGGAIAIQPGWFQGHQTALIYINLGLGTIPPNMSHPMVPPFQITGPTNDPYPGTICLPQVPLPANTSVKPGDHATIQVIETAKHGAALYNCVDIEFAEPSEVEEVTRDNCFNSSIISFGEVFTTTSLTSAAAPKSSLMSVLPVYMVALLSWAMM.

Positions methionine 1–alanine 24 are cleaved as a signal peptide. Cu(2+) is bound at residue histidine 25. 6 N-linked (GlcNAc...) asparagine glycosylation sites follow: asparagine 41, asparagine 56, asparagine 79, asparagine 117, asparagine 150, and asparagine 197. 2 disulfide bridges follow: cysteine 71-cysteine 176 and cysteine 141-cysteine 195. Serine 214 carries GPI-anchor amidated serine lipidation. A propeptide spans alanine 215–methionine 239 (removed in mature form).

The protein belongs to the X325 family. The cofactor is Cu(2+).

It is found in the cell membrane. In terms of biological role, lytic polysaccharide monooxygenase-like protein that has diverged to biological functions other than polysaccharide degradation since it does not perform oxidative cleavage of polysaccharides. Acts as a cell surface-bound protein that functions in the copper-accumulation pathway. May also act as the major cell wall sensor that regulates MAP kinase-dependent hyphal anastomosis, the fusion of hyphal cells. The chain is Lytic polysaccharide monooxygenase-like protein X325 from Aspergillus fumigatus (strain ATCC MYA-4609 / CBS 101355 / FGSC A1100 / Af293) (Neosartorya fumigata).